The primary structure comprises 1423 residues: Protein phosphatase Slingshot homolog 2 (1423 aa).

Disordered regions lie at residues 1-37 and 51-70; these read MALV…PRSI and LPRG…NKHA. Residues 9 to 18 show a composition bias toward low complexity; sequence SPTPSTTSSP. A phosphoserine mark is found at Ser17, Ser25, and Ser36. The DEK-C domain maps to 248–303; it reads ERTERLIKTKLREIMMQKDLENITSKEIRTELEMQMVCNLREFKEFIDNEMIVILG. A Tyrosine-protein phosphatase domain is found at 307-448; the sequence is SPTQIFEHVF…LEEYQGILLA (142 aa). The Phosphocysteine intermediate role is filled by Cys392. Phosphoserine is present on residues Ser461, Ser487, Ser534, Ser631, and Ser633. Disordered stretches follow at residues 698–725, 833–858, 878–950, 967–991, 1021–1042, 1074–1105, and 1207–1226; these read EMAA…DEDQ, HSST…MHSG, RQEQ…HCER, APQD…QRAV, SLGH…KQGL, PQVL…KGDC, and PEAC…DLSH. Residues 884 to 904 show a composition bias toward polar residues; that stretch reads HGTASAGPTLSNRKNSKNDSS. Composition is skewed to basic and acidic residues over residues 910–932, 976–987, and 1033–1042; these read PKWK…EPSK, SRSKKQEGDLKK, and PSKEGEKQGL. Ser1217 is modified (phosphoserine). Thr1422 bears the Phosphothreonine mark.

The protein belongs to the protein-tyrosine phosphatase family. In terms of assembly, interacts with filamentous actin. Expressed in brain, heart, liver, skeletal muscle, testis and thymus. Also expressed at lower levels in kidney, small intestine and spleen. Within testicular seminiferous tubules expressed in germ cells and spermatocytes, where it has a cytoplasmic localization, and round spermatids, where it concentrates in the acrosomal region next to the nucleus.

The protein localises to the cytoplasm. Its subcellular location is the cytoskeleton. It is found in the cell junction. The protein resides in the focal adhesion. It localises to the cytoplasmic vesicle. The protein localises to the secretory vesicle. Its subcellular location is the acrosome. The enzyme catalyses O-phospho-L-tyrosyl-[protein] + H2O = L-tyrosyl-[protein] + phosphate. It catalyses the reaction O-phospho-L-seryl-[protein] + H2O = L-seryl-[protein] + phosphate. It carries out the reaction O-phospho-L-threonyl-[protein] + H2O = L-threonyl-[protein] + phosphate. In terms of biological role, protein phosphatase which regulates actin filament dynamics. Dephosphorylates and activates the actin binding/depolymerizing factor cofilin, which subsequently binds to actin filaments and stimulates their disassembly. Inhibitory phosphorylation of cofilin is mediated by LIMK1, which may also be dephosphorylated and inactivated by this protein. Required for spermatogenesis. Involved in acrosome biogenesis, probably by regulating cofilin-mediated actin cytoskeleton remodeling during proacrosomal vesicle fusion and/or Golgi to perinuclear vesicle trafficking. The sequence is that of Protein phosphatase Slingshot homolog 2 (Ssh2) from Mus musculus (Mouse).